A 68-amino-acid polypeptide reads, in one-letter code: U19-ctenitoxin-Pn1a (68 aa).

Gln-1 carries the pyrrolidone carboxylic acid modification. 5 cysteine pairs are disulfide-bonded: Cys-8/Cys-19, Cys-13/Cys-28, Cys-18/Cys-51, Cys-38/Cys-59, and Cys-53/Cys-65.

Expressed by the venom gland.

The protein resides in the secreted. Its function is as follows. Non-toxic to mice and insects. The sequence is that of U19-ctenitoxin-Pn1a from Phoneutria nigriventer (Brazilian armed spider).